The primary structure comprises 500 residues: MSYFPWLTILVVLPIFAGSLIFFLPHKGNKIVRWYTIAICLLEFLIMTYAFCYHFQLEDPLIQLKEDSKWIDVFDFHWRLGIDGLSLGSILLTGFITTLATLAAWPVTRNSQLFYFLMLAMYSGQIGLFSSRDLLLFFIMWELELIPVYLLLSMWGGKRRLYSATKFILYTAGGSIFFLIGVLGMGLYGSNEPGLDLERLINQSYPTTLEILLYFGFLIAYAVKLPIIPLHTWLPDTHGEAHYSTCMLLAGILLKMGAYGLIRVNMELLPHAHYLFSPWLVIIGAVQIIYAALTSLGQRNFKKRIAYSSVSHMGFIIIGIGSITNIGLNGAILQILSHGFIGATLFFLAGTACDRMRLVYLEELGGISIPMPKIFTMFSSFSMASLALPGMSGFVAELVVFFGLITSPKFMLMPKMLITFVMAIGMILTPIYLLSMLRQMFYGYKLFHVPNKNFVDSGPRELFLLICIFLPVIGIGIYPDFVLSLSVDRVEVLLSNYYTK.

A run of 14 helical transmembrane segments spans residues 4 to 24, 35 to 55, 87 to 107, 111 to 131, 134 to 154, 167 to 187, 211 to 231, 242 to 262, 274 to 294, 313 to 333, 334 to 354, 386 to 406, 417 to 437, and 462 to 482; these read FPWLTILVVLPIFAGSLIFFL, YTIAICLLEFLIMTYAFCYHF, LGSILLTGFITTLATLAAWPV, SQLFYFLMLAMYSGQIGLFSS, LLLFFIMWELELIPVYLLLSM, FILYTAGGSIFFLIGVLGMGL, ILLYFGFLIAYAVKLPIIPLH, HYSTCMLLAGILLKMGAYGLI, YLFSPWLVIIGAVQIIYAALT, MGFIIIGIGSITNIGLNGAIL, QILSHGFIGATLFFLAGTACD, LALPGMSGFVAELVVFFGLIT, LITFVMAIGMILTPIYLLSML, and LFLLICIFLPVIGIGIYPDFV.

This sequence belongs to the complex I subunit 4 family.

The protein resides in the plastid. It localises to the chloroplast thylakoid membrane. It carries out the reaction a plastoquinone + NADH + (n+1) H(+)(in) = a plastoquinol + NAD(+) + n H(+)(out). It catalyses the reaction a plastoquinone + NADPH + (n+1) H(+)(in) = a plastoquinol + NADP(+) + n H(+)(out). This chain is NAD(P)H-quinone oxidoreductase chain 4, chloroplastic, found in Saccharum hybrid (Sugarcane).